Consider the following 755-residue polypeptide: 17S U2 SnRNP complex component HTATSF1 (755 aa).

Disordered stretches follow at residues 1 to 53 (MSGT…YEWD) and 81 to 122 (GASS…KAES). At Ser-2 the chain carries N-acetylserine. Residues 90-122 (EDVHARTAEEPPQEKAPEPTDARKKGEKRKAES) show a composition bias toward basic and acidic residues. RRM domains lie at 133–218 (TNVY…VAKF) and 264–349 (RVVI…AWDG). The segment at 259–353 (RMRHERVVII…AQAWDGTTDY (95 aa)) is U2AF homology motif (UHM). Lys-297 carries the post-translational modification N6-acetyllysine. Residues 380–415 (RGLRRSDSVSASERAGPSRARHFSEHPSTSKMNAQE) form a disordered region. The interval 381–755 (GLRRSDSVSA…LSSDDDDDDI (375 aa)) is mediates interaction with the P-TEFb complex. A phosphoserine mark is found at Ser-387, Ser-403, Ser-407, and Ser-409. A compositionally biased stretch (polar residues) spans 405 to 415 (HPSTSKMNAQE). Residues Lys-429 and Lys-430 each participate in a glycyl lysine isopeptide (Lys-Gly) (interchain with G-Cter in SUMO2) cross-link. Residues 433–755 (KTEDGGEFEE…LSSDDDDDDI (323 aa)) form a disordered region. Residues Ser-445, Ser-452, and Ser-453 each carry the phosphoserine modification. Over residues 462–476 (CPEKESEEGCPKRGF) the composition is skewed to basic and acidic residues. Phosphoserine is present on residues Ser-481, Ser-485, Ser-494, Ser-498, Ser-521, and Ser-529. The segment covering 508-538 (LKNDCEENGLAKESEDDLNKESEEEVGPTKE) has biased composition (basic and acidic residues). Acidic residues predominate over residues 539-552 (SEEDDSEKESDEDC). A compositionally biased stretch (basic and acidic residues) spans 553-563 (SEKQSEDGSER). Phosphoserine is present on residues Ser-557, Ser-561, and Ser-579. Over residues 564-579 (EFEENGLEKDLDEEGS) the composition is skewed to acidic residues. A compositionally biased stretch (basic and acidic residues) spans 580 to 590 (EKELHENVLDK). The segment covering 591–606 (ELEENDSENSEFEDDG) has biased composition (acidic residues). 5 positions are modified to phosphoserine: Ser-597, Ser-600, Ser-607, Ser-616, and Ser-624. Composition is skewed to acidic residues over residues 613–633 (EEGS…EEDT) and 640–651 (DESDEKEDEEYA). Thr-633 carries the post-translational modification Phosphothreonine. Phosphoserine is present on Ser-642. Residues 652–674 (DEKGLEAADKKAEEGDADEKLFE) are compositionally biased toward basic and acidic residues. Residues 675-713 (ESDDKEDEDADGKEVEDADEKLFEDDDSNEKLFDEEEDS) show a composition bias toward acidic residues. Phosphoserine is present on residues Ser-676, Ser-702, Ser-713, Ser-714, and Ser-721. The segment covering 714 to 725 (SEKLFDDSDERG) has biased composition (basic and acidic residues). Ser-748 is modified (phosphoserine; by CK2).

It belongs to the HTATSF1 family. In terms of assembly, component of the 17S U2 SnRNP complex, a ribonucleoprotein complex that contains small nuclear RNA (snRNA) U2 and a number of specific proteins. Within the 17S U2 SnRNP complex, interacts (via UHM region) directly with SF3B1. Component of a complex which is at least composed of HTATSF1/Tat-SF1, the P-TEFb complex components CDK9 and CCNT1, RNA polymerase II, SUPT5H, and NCL/nucleolin. Interacts with GTF2F2/RAP30 and POLR2A. Interacts with TCERG1/CA150. Interacts with (poly-ADP-ribosylated) RPA1; promoting HTATSF1 recruitment to DNA damage sites. Interacts (when phosphorylated) with TOPBP1; promoting recruitment of TOPBP1 to DNA damage sites during S-phase. Phosphorylation at Ser-748 by CK2 during S-phase in response to DNA damage promotes interaction with TOPBP1 and double-strand break (DSB) repair via homologous recombination. As to expression, widely expressed.

The protein resides in the nucleus. It localises to the chromosome. In terms of biological role, component of the 17S U2 SnRNP complex of the spliceosome, a large ribonucleoprotein complex that removes introns from transcribed pre-mRNAs. The 17S U2 SnRNP complex (1) directly participates in early spliceosome assembly and (2) mediates recognition of the intron branch site during pre-mRNA splicing by promoting the selection of the pre-mRNA branch-site adenosine, the nucleophile for the first step of splicing. Within the 17S U2 SnRNP complex, HTATSF1 is required to stabilize the branchpoint-interacting stem loop. HTATSF1 is displaced from the 17S U2 SnRNP complex before the stable addition of the 17S U2 SnRNP complex to the spliceosome, destabilizing the branchpoint-interacting stem loop and allowing to probe intron branch site sequences. Also acts as a regulator of transcriptional elongation, possibly by mediating the reciprocal stimulatory effect of splicing on transcriptional elongation. Involved in double-strand break (DSB) repair via homologous recombination in S-phase by promoting the recruitment of TOPBP1 to DNA damage sites. Mechanistically, HTATSF1 is (1) recruited to DNA damage sites in S-phase via interaction with poly-ADP-ribosylated RPA1 and (2) phosphorylated by CK2, promoting recruitment of TOPBP1, thereby facilitating RAD51 nucleofilaments formation and RPA displacement, followed by homologous recombination. Its function is as follows. (Microbial infection) In case of infection by HIV-1, it is up-regulated by the HIV-1 proteins NEF and gp120, acts as a cofactor required for the Tat-enhanced transcription of the virus. This chain is 17S U2 SnRNP complex component HTATSF1, found in Homo sapiens (Human).